Consider the following 657-residue polypeptide: ABC1 family protein YPL109C, mitochondrial (657 aa).

A mitochondrion-targeting transit peptide spans 1–15 (MSFLKFAYRNSWRYY).

The protein belongs to the protein kinase superfamily. ADCK protein kinase family.

It localises to the mitochondrion. The polypeptide is ABC1 family protein YPL109C, mitochondrial (Saccharomyces cerevisiae (strain ATCC 204508 / S288c) (Baker's yeast)).